A 129-amino-acid chain; its full sequence is MSRKESRVQAFQTLFQLEMKDSDLTINEAISFIKDDNPDLDFEFIHWLVSGVKGHEPVLDETISPYLKDWTIARLLKTDRIILRMATYEILHSDTPAKVVMNEAVELTKQFSDDDHYKFINGVLSNIKK.

The protein belongs to the NusB family.

Involved in transcription antitermination. Required for transcription of ribosomal RNA (rRNA) genes. Binds specifically to the boxA antiterminator sequence of the ribosomal RNA (rrn) operons. This is Transcription antitermination protein NusB from Staphylococcus aureus (strain USA300 / TCH1516).